Reading from the N-terminus, the 380-residue chain is Glutamine synthetase, chloroplastic (380 aa).

Residues 35-125 enclose the GS beta-grasp domain; that stretch reads MAAEYIWADG…VMCEVFAPDG (91 aa). The GS catalytic domain maps to 132-380; sequence TRAKLREIID…RLLIKTVLKG (249 aa).

The protein belongs to the glutamine synthetase family. In terms of assembly, homooctamer.

The protein localises to the plastid. The protein resides in the chloroplast. It catalyses the reaction L-glutamate + NH4(+) + ATP = L-glutamine + ADP + phosphate + H(+). This chain is Glutamine synthetase, chloroplastic (GLN2), found in Chlamydomonas reinhardtii (Chlamydomonas smithii).